Consider the following 792-residue polypeptide: Protocadherin beta-18 (792 aa).

The first 26 residues, 1–26, serve as a signal peptide directing secretion; that stretch reads MAARGSCVSRQRQVLFLFLLGGLCLA. Cadherin domains follow at residues 27–133, 134–242, 243–347, 348–451, 452–561, and 568–676; these read GSEL…SPIF, QDKK…APQF, PQEL…APEL, IMSS…APAF, NQTS…APFV, and ASAP…LPEV. A glycan (N-linked (GlcNAc...) asparagine) is linked at asparagine 169. Residues asparagine 418 and asparagine 452 are each glycosylated (N-linked (GlcNAc...) asparagine). The chain crosses the membrane as a helical span at residues 693–713; it reads VIALASVSSLFLLSVLLFVGV.

Its subcellular location is the cell membrane. Potential calcium-dependent cell-adhesion protein. This is Protocadherin beta-18 (Pcdhb18) from Mus musculus (Mouse).